The chain runs to 132 residues: Small ribosomal subunit protein uS8 (132 aa).

The protein belongs to the universal ribosomal protein uS8 family. In terms of assembly, part of the 30S ribosomal subunit. Contacts proteins S5 and S12.

Functionally, one of the primary rRNA binding proteins, it binds directly to 16S rRNA central domain where it helps coordinate assembly of the platform of the 30S subunit. This Ehrlichia canis (strain Jake) protein is Small ribosomal subunit protein uS8.